Consider the following 302-residue polypeptide: L-aminoadipate-semialdehyde dehydrogenase-phosphopantetheinyl transferase (302 aa).

CoA-binding positions include arginine 44, 83–88, and 105–108; these read RTGKGK and NVSH. Residues aspartate 126 and glutamate 178 each contribute to the Mg(2+) site. 178–182 serves as a coordination point for CoA; that stretch reads ESFIK.

This sequence belongs to the P-Pant transferase superfamily. AcpS family. In terms of assembly, monomer. Mg(2+) serves as cofactor.

The protein resides in the cytoplasm. It localises to the cytosol. The enzyme catalyses apo-[ACP] + CoA = holo-[ACP] + adenosine 3',5'-bisphosphate + H(+). It catalyses the reaction apo-[ACP] + acetyl-CoA = acetyl-[ACP] + adenosine 3',5'-bisphosphate + H(+). Functionally, catalyzes the post-translational modification of target proteins by phosphopantetheine. Can transfer the 4'-phosphopantetheine moiety from coenzyme A, regardless of whether the CoA is presented in the free thiol form or as an acetyl thioester, to a serine residue of a broad range of acceptors. The protein is L-aminoadipate-semialdehyde dehydrogenase-phosphopantetheinyl transferase (aasdhppt) of Xenopus laevis (African clawed frog).